The following is a 485-amino-acid chain: P2X purinoceptor 2 (485 aa).

Over 1 to 43 (MAAAQPRLPAGAAMVRRLARGCWSAFWDYETPKVIVVRNRRLG) the chain is Cytoplasmic. Cystine bridges form between Cys-22-Cys-443, Cys-126-Cys-177, Cys-137-Cys-160, Cys-143-Cys-171, Cys-227-Cys-237, and Cys-271-Cys-280. A helical membrane pass occupies residues 44–64 (FVHRMVQLLILLYFVWYVFIV). Topologically, residues 65–339 (QKSYQDSETG…IVHGQAGKFS (275 aa)) are extracellular. Residues Lys-82 and Lys-84 each coordinate ATP. Asn-195 is a glycosylation site (N-linked (GlcNAc...) asparagine). Thr-197 contacts ATP. Asn-252 carries an N-linked (GlcNAc...) asparagine glycan. Ser-297, Asn-301, and Arg-303 together coordinate ATP. Asn-311 is a glycosylation site (N-linked (GlcNAc...) asparagine). Residue Lys-321 coordinates ATP. Residues 322–335 (AYGIRIDVIVHGQA) are pore-forming motif. The chain crosses the membrane as a helical span at residues 340-360 (LIPTIINLATALTSIGVGSFL). Over 361-485 (CDWILLTFMN…STDPKGLAQL (125 aa)) the chain is Cytoplasmic. Residues 406–485 (PPPSHYSQDQ…STDPKGLAQL (80 aa)) form a disordered region. The span at 420–436 (PSGEGPALGEGAELPLA) shows a compositional bias: low complexity. Polar residues predominate over residues 469 to 478 (PSQQDSTSTD).

The protein belongs to the P2X receptor family. Homotrimer and heterotrimer; functional P2XRs are organized as homomeric and heteromeric trimers. Homotrimer. Forms heterotrimer with P2XR1. Forms heterotrimer with P2XR3. Forms heterotrimer with P2XR6.

It is found in the cell membrane. The enzyme catalyses Ca(2+)(in) = Ca(2+)(out). The catalysed reaction is K(+)(in) = K(+)(out). It catalyses the reaction Na(+)(in) = Na(+)(out). With respect to regulation, fast activation by external ATP. Exhibits slow desensitization during prolonged ATP activation. Not sensitive to the ATP agonist:alpha/beta-methylene-ATP. ATP-gated nonselective transmembrane cation channel permeable to potassium, sodium and calcium. Activation by extracellular ATP induces a variety of cellular responses, such as excitatory postsynaptic responses in sensory neurons, neuromuscular junctions (NMJ) formation, hearing, perception of taste and peristalsis. In the inner ear, regulates sound transduction and auditory neurotransmission, outer hair cell electromotility, inner ear gap junctions, and K(+) recycling. Mediates synaptic transmission between neurons and from neurons to smooth muscle. This Mus musculus (Mouse) protein is P2X purinoceptor 2 (P2rx2).